The sequence spans 427 residues: uncharacterized protein (427 aa).

This is an uncharacterized protein from Human herpesvirus 7 (strain JI) (HHV-7).